Consider the following 245-residue polypeptide: MIKLVLIRHGQSLWNLENRFTGWTDVDLSENGLSEAREAGAILKKNGYTFDVAYTSVLKRAIRTLWIVLHEMNLAWVPVHKSWKLNERHYGALQGLNKDETAQKYGEEQVHIWRRSIDVRPPALTEDDPRYEMNDPRYKALKKGEFPLTECLVDTEKRVLDYWHSEIAPKLKNGNKVIISSHGNTIRSLVKYLDNLSSDGVVSLNIPTSIPLVYELDENLRPIRHYYLSMDGEVPEGEIPKHISF.

Substrate contacts are provided by residues 8–15 (RHGQSLWN), 21–22 (TG), Arg-60, 87–90 (ERHY), Lys-98, 114–115 (RR), and 183–184 (GN). The active-site Tele-phosphohistidine intermediate is the His-9. Residue Glu-87 is the Proton donor/acceptor of the active site.

The protein belongs to the phosphoglycerate mutase family. BPG-dependent PGAM subfamily.

The catalysed reaction is (2R)-2-phosphoglycerate = (2R)-3-phosphoglycerate. The protein operates within carbohydrate degradation; glycolysis; pyruvate from D-glyceraldehyde 3-phosphate: step 3/5. Functionally, catalyzes the interconversion of 2-phosphoglycerate and 3-phosphoglycerate. In Bacillus cereus (strain ZK / E33L), this protein is 2,3-bisphosphoglycerate-dependent phosphoglycerate mutase.